Here is a 420-residue protein sequence, read N- to C-terminus: Heterogeneous nuclear ribonucleoprotein D-like (420 aa).

2 disordered regions span residues 1–83 and 96–120; these read MEVP…RRRP and QRSA…SVTM. At Arg25 the chain carries Omega-N-methylarginine. Over residues 36–52 the composition is skewed to low complexity; it reads RQLAPLLPSLAPSSARQ. 2 RRM domains span residues 148 to 230 and 233 to 312; these read GKMF…KGKE and KKVF…QPKE. Lys161 is subject to N6-methyllysine. A Glycyl lysine isopeptide (Lys-Gly) (interchain with G-Cter in SUMO2) cross-link involves residue Lys209. The residue at position 216 (Lys216) is an N6-acetyllysine. Position 241 is a phosphoserine (Ser241). Disordered stretches follow at residues 313-348 and 398-420; these read VYRQ…NWNQ and GQQS…YQPY. A compositionally biased stretch (gly residues) spans 323 to 342; it reads GGRGAAAGGRGGTRGRGRGQ. The segment at 342 to 420 is necessary for interaction with TNPO1; it reads QGQNWNQGFN…GNHQNNYQPY (79 aa). Residues 396-420 are necessary for its nuclear import and export; sequence YSGQQSTYGKASRGGGNHQNNYQPY. Residue Arg408 is modified to Dimethylated arginine; alternate. Arg408 is subject to Omega-N-methylarginine; alternate.

Interacts with ZNF148. Interacts with TNPO1. Post-translationally, dimethylation of Arg-408 is probably of the asymmetric type. Expressed in heart, brain, placenta, lung, liver, skeletal muscle, kidney, pancreas, spleen, thymus, prostate, testis, ovary, small intestine, colon and leukocytes. Expressed in myeloid leukemia, gastric adenocarcinoma, cervical carcinoma, hepatoma, fibrosarcoma, colon adenocarcinoma, epidermoid carcinoma, osteosarcoma and urinary bladder carcinoma cells.

It localises to the nucleus. The protein resides in the cytoplasm. Functionally, acts as a transcriptional regulator. Promotes transcription repression. Promotes transcription activation in differentiated myotubes. Binds to double- and single-stranded DNA sequences. Binds to the transcription suppressor CATR sequence of the COX5B promoter. Binds with high affinity to RNA molecules that contain AU-rich elements (AREs) found within the 3'-UTR of many proto-oncogenes and cytokine mRNAs. Binds both to nuclear and cytoplasmic poly(A) mRNAs. Binds to poly(G) and poly(A), but not to poly(U) or poly(C) RNA homopolymers. Binds to the 5'-ACUAGC-3' RNA consensus sequence. The chain is Heterogeneous nuclear ribonucleoprotein D-like (HNRNPDL) from Homo sapiens (Human).